The following is a 97-amino-acid chain: NADH-ubiquinone oxidoreductase chain 4L (97 aa).

A run of 3 helical transmembrane segments spans residues 1 to 21 (MSMF…YVFC), 28 to 48 (LVVL…IVLF), and 57 to 77 (FFPV…LSIL).

Belongs to the complex I subunit 4L family.

It localises to the mitochondrion membrane. The catalysed reaction is a ubiquinone + NADH + 5 H(+)(in) = a ubiquinol + NAD(+) + 4 H(+)(out). Its function is as follows. Core subunit of the mitochondrial membrane respiratory chain NADH dehydrogenase (Complex I) that is believed to belong to the minimal assembly required for catalysis. Complex I functions in the transfer of electrons from NADH to the respiratory chain. The immediate electron acceptor for the enzyme is believed to be ubiquinone. The sequence is that of NADH-ubiquinone oxidoreductase chain 4L (ND4L) from Locusta migratoria (Migratory locust).